The sequence spans 397 residues: Acetate kinase (397 aa).

A Mg(2+)-binding site is contributed by Asn-8. Lys-15 provides a ligand contact to ATP. Arg-89 lines the substrate pocket. Asp-146 serves as the catalytic Proton donor/acceptor. ATP contacts are provided by residues 206–210 (HLGNG), 281–283 (DLR), and 329–333 (GVGEN). Mg(2+) is bound at residue Glu-382.

Belongs to the acetokinase family. As to quaternary structure, homodimer. It depends on Mg(2+) as a cofactor. Requires Mn(2+) as cofactor.

It localises to the cytoplasm. The enzyme catalyses acetate + ATP = acetyl phosphate + ADP. The protein operates within metabolic intermediate biosynthesis; acetyl-CoA biosynthesis; acetyl-CoA from acetate: step 1/2. Its function is as follows. Catalyzes the formation of acetyl phosphate from acetate and ATP. Can also catalyze the reverse reaction. This Bacillus mycoides (strain KBAB4) (Bacillus weihenstephanensis) protein is Acetate kinase.